Here is a 248-residue protein sequence, read N- to C-terminus: Uracil-DNA glycosylase (248 aa).

The active-site Proton acceptor is the D85.

Belongs to the uracil-DNA glycosylase (UDG) superfamily. UNG family.

Its subcellular location is the cytoplasm. The catalysed reaction is Hydrolyzes single-stranded DNA or mismatched double-stranded DNA and polynucleotides, releasing free uracil.. Functionally, excises uracil residues from the DNA which can arise as a result of misincorporation of dUMP residues by DNA polymerase or due to deamination of cytosine. In Deinococcus deserti (strain DSM 17065 / CIP 109153 / LMG 22923 / VCD115), this protein is Uracil-DNA glycosylase.